The sequence spans 471 residues: Reticulon-2 (471 aa).

3 disordered regions span residues 1–137, 153–181, and 205–234; these read MGQV…ERPL, SAGS…ASEA, and QLSP…DDEP. Residues 14 to 25 are compositionally biased toward low complexity; it reads APSTASSTPDST. A compositionally biased stretch (basic and acidic residues) spans 32–43; that stretch reads SDFRELHTAREF. Serine 44 is subject to Phosphoserine. Polar residues-rich tracts occupy residues 100–118 and 159–168; these read PQQS…LSQS and DSATSSSTPL. The span at 169-181 shows a compositional bias: acidic residues; the sequence is ENEEPDGLEASEA. Residues 205–229 are compositionally biased toward polar residues; the sequence is QLSPSSGTPQAHTPSPQRSQDSNSG. Phosphoserine occurs at positions 226 and 228. A Reticulon domain is found at 272 to 471; sequence VADLLYWKDT…SVSGSKAKAE (200 aa). Transmembrane regions (helical) follow at residues 295 to 315 and 390 to 410; these read LLCL…LLGL and LLFY…LVIL.

Interacts with SPAST. Interacts with BACE1. Interacts (via first transmembrane domain) with ARL6IP5/GTRAP3-18. Interacts (via N-terminus) with SLC1A1/EAAC1; the interaction promotes cell surface expression of SLC1A1. Detected in skeletal and cardiac muscle (at protein level). Expressed predominantly in neural and muscular tissues.

The protein resides in the endoplasmic reticulum membrane. It localises to the sarcoplasmic reticulum membrane. Its subcellular location is the cell membrane. It is found in the sarcolemma. The protein localises to the T-tubule. The protein resides in the cytoplasm. It localises to the myofibril. Its subcellular location is the sarcomere. It is found in the z line. The protein localises to the cytoskeleton. In terms of biological role, inhibits amyloid precursor protein processing, probably by blocking BACE1 activity. Enhances trafficking of the glutamate transporter SLC1A1/EAAC1 from the endoplasmic reticulum to the cell surface. Plays a role in the translocation of SLC2A4/GLUT4 from intracellular membranes to the cell membrane which facilitates the uptake of glucose into the cell. This chain is Reticulon-2, found in Mus musculus (Mouse).